The chain runs to 281 residues: 4-diphosphocytidyl-2-C-methyl-D-erythritol kinase (281 aa).

Active-site residues include Lys11 and Asp138.

It belongs to the GHMP kinase family. IspE subfamily.

It carries out the reaction 4-CDP-2-C-methyl-D-erythritol + ATP = 4-CDP-2-C-methyl-D-erythritol 2-phosphate + ADP + H(+). The protein operates within isoprenoid biosynthesis; isopentenyl diphosphate biosynthesis via DXP pathway; isopentenyl diphosphate from 1-deoxy-D-xylulose 5-phosphate: step 3/6. Functionally, catalyzes the phosphorylation of the position 2 hydroxy group of 4-diphosphocytidyl-2C-methyl-D-erythritol. The sequence is that of 4-diphosphocytidyl-2-C-methyl-D-erythritol kinase from Pelagibacter ubique (strain HTCC1062).